A 383-amino-acid polypeptide reads, in one-letter code: uncharacterized protein (383 aa).

Disordered stretches follow at residues 27-66 (ENNN…NKKP) and 242-281 (LITT…ITRR). Composition is skewed to low complexity over residues 28 to 63 (NNNT…NNNN) and 242 to 275 (LITT…KSSS).

This is an uncharacterized protein from Dictyostelium discoideum (Social amoeba).